We begin with the raw amino-acid sequence, 464 residues long: Tyrosine--tRNA ligase, mitochondrial (464 aa).

L-tyrosine is bound at residue Tyr-61. Asp-65 lines the ATP pocket. The short motif at 66-75 (PTADSLHVGN) is the 'HIGH' region element. L-tyrosine is bound by residues Asp-105, Tyr-209, Gln-213, Asp-216, and Gln-235. Residues 270–274 (KFGKS) carry the 'KMSKS' region motif. Lys-273 provides a ligand contact to ATP.

This sequence belongs to the class-I aminoacyl-tRNA synthetase family. Homodimer.

The protein resides in the mitochondrion matrix. It catalyses the reaction tRNA(Tyr) + L-tyrosine + ATP = L-tyrosyl-tRNA(Tyr) + AMP + diphosphate + H(+). In terms of biological role, catalyzes the attachment of tyrosine to tRNA(Tyr) in a two-step reaction: tyrosine is first activated by ATP to form Tyr-AMP and then transferred to the acceptor end of tRNA(Tyr). The chain is Tyrosine--tRNA ligase, mitochondrial from Drosophila melanogaster (Fruit fly).